The primary structure comprises 160 residues: MEIDILIDAPHWDALDLCGLAQSACVATLTDLSLDPDDFALSILACDDARIATLNTQFRGKPTPTNVLSWPSEDRAPETPGAMPHLSDLAAELGDLALAFETCAREAADGGKPLPDHISHLIVHGLLHCLGFDHETDADADLMERLETRILARLGVPDPY.

3 residues coordinate Zn(2+): His124, His128, and His134.

It belongs to the endoribonuclease YbeY family. It depends on Zn(2+) as a cofactor.

The protein localises to the cytoplasm. Its function is as follows. Single strand-specific metallo-endoribonuclease involved in late-stage 70S ribosome quality control and in maturation of the 3' terminus of the 16S rRNA. This is Endoribonuclease YbeY from Jannaschia sp. (strain CCS1).